A 361-amino-acid chain; its full sequence is Alanine racemase (361 aa).

Residue Lys35 is the Proton acceptor; specific for D-alanine of the active site. At Lys35 the chain carries N6-(pyridoxal phosphate)lysine. Arg132 lines the substrate pocket. The active-site Proton acceptor; specific for L-alanine is the Tyr257. A substrate-binding site is contributed by Met305.

Belongs to the alanine racemase family. Pyridoxal 5'-phosphate is required as a cofactor.

It catalyses the reaction L-alanine = D-alanine. It participates in amino-acid biosynthesis; D-alanine biosynthesis; D-alanine from L-alanine: step 1/1. In terms of biological role, catalyzes the interconversion of L-alanine and D-alanine. May also act on other amino acids. In Thioalkalivibrio sulfidiphilus (strain HL-EbGR7), this protein is Alanine racemase (alr).